Here is a 308-residue protein sequence, read N- to C-terminus: Thiohydrolase (308 aa).

It belongs to the polyketide transferase af380 family.

Its pathway is mycotoxin biosynthesis. In terms of biological role, thiohydrolase; part of the gene cluster that mediates the biosynthesis of brefeldin A (BFA), a protein transport inhibitor that shows antiviral, antifungal, and antitumor properties. The proposed biosynthesis of BFA involves formation of an acyclic polyketide chain that is differentially tailored throughout the backbone. The highly reducing polyketide synthase Bref-PKS is proposed to synthesize the precisely reduced octaketide precursor, which could then be directly offloaded by the thiohydrolase enzyme Bref-TH followed by a cytochrome P450 monooxygenase-mediated formation of the cyclopentane ring and macrocyclization to afford 7-deoxy BFA. Alternatively, the first ring annulation can also occur on the ACP-tethered intermediate before the thiohydrolase release and lactonization. The C7-hydroxylation by another cytochrome P450 monooxygenase is believed to be the final step in the process to obtain the final structure of BFA. In addition to the HRPKS Bref-PKS and the thiohydrolase Bref-TH, the brefeldin A biosynthesis cluster contains 4 cytochrome p450 monooxygenases (called orf3 to orf6), as well a the probable cluster-specific transcription regulator orf8. This Eupenicillium brefeldianum (Penicillium brefeldianum) protein is Thiohydrolase.